The chain runs to 522 residues: Sorting nexin-1 (522 aa).

The segment at 1–142 is disordered; sequence MASGGGGCSA…ELEEEEQEDQ (142 aa). Residues Ser-32 and Ser-39 each carry the phosphoserine modification. Over residues 35-45 the composition is skewed to acidic residues; sequence EAGDSDTEGED. Thr-41 and Thr-48 each carry phosphothreonine. Residues Ser-58 and Ser-72 each carry the phosphoserine modification. The span at 132–142 shows a compositional bias: acidic residues; that stretch reads EELEEEEQEDQ. Residues 143–272 enclose the PX domain; that stretch reads FDLTVGITDP…EFLEKEELPR (130 aa). Residues Arg-186, Ser-188, and Lys-214 each coordinate a 1,2-diacyl-sn-glycero-3-phospho-(1D-myo-inositol-3-phosphate). Phosphoserine is present on Ser-188. An N6-acetyllysine modification is found at Lys-237. Arg-238 is an a 1,2-diacyl-sn-glycero-3-phospho-(1D-myo-inositol-3-phosphate) binding site. Ser-280 carries the phosphoserine modification. Residues 281–298 form a membrane-binding amphipathic helix region; it reads GAGLLKMFNKATDAVSKM. Residues 302–522 form the BAR domain; that stretch reads MNESDIWFEE…AFLPEAKAIS (221 aa).

The protein belongs to the sorting nexin family. As to quaternary structure, predominantly forms heterodimers with BAR domain-containing sorting nexins SNX5, SNX6 and SNX32; can self-associate to form homodimers. The heterodimers are proposed to self-assemble into helical arrays on the membrane to stabilize and expand local membrane curvature underlying endosomal tubule formation. Thought to be a component of the originally described retromer complex (also called SNX-BAR retromer) which is a pentamer containing the heterotrimeric retromer cargo-selective complex (CSC), also described as vacuolar protein sorting subcomplex (VPS) and a heterodimeric membrane-deforming subcomplex formed between SNX1 or SNX2 and SNX5 or SNX6 (also called SNX-BAR subcomplex); the respective CSC and SNX-BAR subcomplexes associate with low affinity. Interacts with SNX5, SNX6, SNX32, VPS26A, VPS29, VPS35, DRD5, DENND5A, KALRN, RHOG (GDP-bound form). The interaction with SNX2 is reported controversially. Interacts with DNAJC13; prevented by presence of HGS. Interacts with HGS.

It localises to the endosome membrane. The protein resides in the golgi apparatus. The protein localises to the trans-Golgi network membrane. Its subcellular location is the early endosome membrane. It is found in the cell projection. It localises to the lamellipodium. Its function is as follows. Involved in several stages of intracellular trafficking. Interacts with membranes containing phosphatidylinositol 3-phosphate (PtdIns(3P)) or phosphatidylinositol 3,5-bisphosphate (PtdIns(3,5)P2). Acts in part as component of the retromer membrane-deforming SNX-BAR subcomplex. The SNX-BAR retromer mediates retrograde transport of cargo proteins from endosomes to the trans-Golgi network (TGN) and is involved in endosome-to-plasma membrane transport for cargo protein recycling. The SNX-BAR subcomplex functions to deform the donor membrane into a tubular profile called endosome-to-TGN transport carrier (ETC). Can sense membrane curvature and has in vitro vesicle-to-membrane remodeling activity. Involved in retrograde endosome-to-TGN transport of lysosomal enzyme receptors (IGF2R, M6PR and SORT1). Plays a role in targeting ligand-activated EGFR to the lysosomes for degradation after endocytosis from the cell surface and release from the Golgi. Involvement in retromer-independent endocytic trafficking of P2RY1 and lysosomal degradation of protease-activated receptor-1/F2R. Promotes KALRN- and RHOG-dependent but retromer-independent membrane remodeling such as lamellipodium formation; the function is dependent on GEF activity of KALRN. Required for endocytosis of DRD5 upon agonist stimulation but not for basal receptor trafficking. This chain is Sorting nexin-1 (SNX1), found in Bos taurus (Bovine).